A 103-amino-acid polypeptide reads, in one-letter code: Co-chaperonin GroES (103 aa).

Belongs to the GroES chaperonin family. As to quaternary structure, heptamer of 7 subunits arranged in a ring. Interacts with the chaperonin GroEL.

Its subcellular location is the cytoplasm. Together with the chaperonin GroEL, plays an essential role in assisting protein folding. The GroEL-GroES system forms a nano-cage that allows encapsulation of the non-native substrate proteins and provides a physical environment optimized to promote and accelerate protein folding. GroES binds to the apical surface of the GroEL ring, thereby capping the opening of the GroEL channel. The polypeptide is Co-chaperonin GroES (Synechococcus sp. (strain CC9902)).